A 202-amino-acid chain; its full sequence is ATP-dependent Clp protease proteolytic subunit (202 aa).

The Nucleophile role is filled by Ser-98. His-123 is an active-site residue.

The protein belongs to the peptidase S14 family. Fourteen ClpP subunits assemble into 2 heptameric rings which stack back to back to give a disk-like structure with a central cavity, resembling the structure of eukaryotic proteasomes.

The protein resides in the cytoplasm. It catalyses the reaction Hydrolysis of proteins to small peptides in the presence of ATP and magnesium. alpha-casein is the usual test substrate. In the absence of ATP, only oligopeptides shorter than five residues are hydrolyzed (such as succinyl-Leu-Tyr-|-NHMec, and Leu-Tyr-Leu-|-Tyr-Trp, in which cleavage of the -Tyr-|-Leu- and -Tyr-|-Trp bonds also occurs).. Functionally, cleaves peptides in various proteins in a process that requires ATP hydrolysis. Has a chymotrypsin-like activity. Plays a major role in the degradation of misfolded proteins. In Syntrophobacter fumaroxidans (strain DSM 10017 / MPOB), this protein is ATP-dependent Clp protease proteolytic subunit.